A 499-amino-acid polypeptide reads, in one-letter code: MLERATRTIKTAGLLLAAYFVLNIVLRIVLPHSLELDEAEQSFFSQYLLAGYGPQPPFYNWMQYAVVSVTGISIGALIVPKNILLFLSYLFYGLAGRRVLKDEALAAVGMLALITLPQVSYMAQQDLTHTTALLFASSLFLYGFFRTLDRPDMASYLLLGLATGIGLISKYNFALMPVVALIAILPDAEWRRRALDWRMLAAITVALVIVLPHAVWLQGNLAFASSDTLVKMAAGSEPAGAVRIGKGLLAFLVAIIAFAALPVVIFAATFRRDFVRALSAGNRWTGMMERMMLASLAGIALIVLFTGSTTVRERWLDPFLLVLPIYFLAKMQAAGLDLSAGLRRFRPVLPVLMACVLIALGFRVVGAGLIGTYSRPNVPMAGFAREMTRQAEPALVIASDTYIGGNMRLQFPDVPVVIPDFPAPGIPAYAEAKGPVLIVWRGKKTATAADAVMPERFSSALTAAGIALQEIGSLSLPYYFGRQGDNFALGYAWVRPETR.

10 helical membrane-spanning segments follow: residues Thr11 to Pro31, Ile74 to Leu94, Glu103 to Ala123, Gln125 to Phe145, Ile165 to Leu185, Met199 to Gly219, Leu248 to Ala268, Met291 to Val311, Leu316 to Leu336, and Val351 to Gly371.

This sequence belongs to the glycosyltransferase 83 family.

It localises to the cell inner membrane. It functions in the pathway bacterial outer membrane biogenesis; LPS core biosynthesis. In terms of biological role, involved in the modification of the lipopolysaccharide (LPS) inner core. Catalyzes the transfer of a galacturonic acid (GalA) residue to the 4-position of the outer Kdo (3-deoxy-D-manno-octulosonic acid) residue of the LPS inner core, using dodecaprenyl phosphate-GalA as the donor substrate. GalA addition by RgtA is required for RgtB activity. In Rhizobium johnstonii (strain DSM 114642 / LMG 32736 / 3841) (Rhizobium leguminosarum bv. viciae), this protein is Lipopolysaccharide core galacturonosyltransferase RgtA.